The primary structure comprises 333 residues: MATLKDKLIGHLATSQEPRSYNKITVVGVGAVGMACAISILMKDLADEVALVDVMEDKLKGEMMDLQHGSLFLHTAKIVSGKDYSVSAGSKLVVITAGARQQEGESRLNLVQRNVNIFKFIIPDIVKHSPDCIILVVSNPVDVLTYVAWKLSGLPMHRIIGSGCNLDSARFRYLMGERLGVHSSSCHGWVIGEHGDSSVPVWSGMNVAGVSLKELHPELGTDKDKENWKKLHKDVVDSAYEVIKLKGYTSWAIGLSVADLAETIMKNLCRVHPVSTMVKDFYGIKNDVFLSLPCVLDNHGISNIVKMKLKPDEEQQLQKSATTLWDIQKDLKF.

N-acetylalanine is present on A2. Residues 30-58 and R100 each bind NAD(+); that span reads GAVG…MEDK. Substrate contacts are provided by R107, N139, and R170. An NAD(+)-binding site is contributed by N139. Residue H194 is the Proton acceptor of the active site. Residue T249 participates in substrate binding.

The protein belongs to the LDH/MDH superfamily. LDH family. In terms of assembly, homotetramer.

The protein resides in the cytoplasm. The catalysed reaction is (S)-lactate + NAD(+) = pyruvate + NADH + H(+). It participates in fermentation; pyruvate fermentation to lactate; (S)-lactate from pyruvate: step 1/1. Functionally, interconverts simultaneously and stereospecifically pyruvate and lactate with concomitant interconversion of NADH and NAD(+). The chain is L-lactate dehydrogenase A chain (ldha) from Squalus acanthias (Spiny dogfish).